The chain runs to 175 residues: Riboflavin kinase (175 aa).

54 to 59 (GLGEGK) provides a ligand contact to CDP. Mg(2+) contacts are provided by Thr-83 and Asn-85. 2 residues coordinate FMN: Thr-142 and Glu-150. Residue 155–158 (FHLR) coordinates CDP.

The protein belongs to the archaeal riboflavin kinase family. It depends on Mg(2+) as a cofactor.

The catalysed reaction is riboflavin + CTP = CDP + FMN + H(+). The protein operates within cofactor biosynthesis; FMN biosynthesis; FMN from riboflavin (CTP route): step 1/1. Catalyzes the CTP-dependent phosphorylation of riboflavin (vitamin B2) to form flavin mononucleotide (FMN). This is Riboflavin kinase from Saccharolobus solfataricus (strain ATCC 35092 / DSM 1617 / JCM 11322 / P2) (Sulfolobus solfataricus).